The primary structure comprises 275 residues: Cis-2,3-dihydrobiphenyl-2,3-diol dehydrogenase (275 aa).

Position 9–33 (Leu-9–Val-33) interacts with NAD(+). Ser-140 is a binding site for substrate. Catalysis depends on Tyr-153, which acts as the Proton acceptor.

It belongs to the short-chain dehydrogenases/reductases (SDR) family.

It catalyses the reaction (2R,3S)-3-phenylcyclohexa-3,5-diene-1,2-diol + NAD(+) = biphenyl-2,3-diol + NADH + H(+). Its pathway is xenobiotic degradation; biphenyl degradation; 2-hydroxy-2,4-pentadienoate and benzoate from biphenyl: step 2/4. The polypeptide is Cis-2,3-dihydrobiphenyl-2,3-diol dehydrogenase (bphB) (Metapseudomonas furukawaii (Pseudomonas furukawaii)).